Here is a 385-residue protein sequence, read N- to C-terminus: Probable nitrate transporter NarT (385 aa).

12 helical membrane-spanning segments follow: residues 14-34 (TLSLVVGFMAWSIISPLMPYI), 47-67 (IILAIPVILGSILRVPFGYLT), 69-89 (IIGAKWVFFCSFVILLFPIFF), 97-117 (GMLMLSGFFLGVGGAIFSVGV), 139-159 (GNIGTAVSSFLAPPIAGIIGW), 161-181 (TTVRSYLIIIAIFAILMFIFG), 205-225 (LYYLSLWYFITFGAFVAFGLF), 246-266 (GVFIALATFLRPIGGILGDKF), 277-297 (IIMIVGAVILGISSHIALFTI), 302-322 (ISICAGLGNGLIFKLVPSYFA), 330-350 (GIVSMMGGLGGFFPPLVITYV), and 359-379 (LAFILLAIFGVLAFITMGHLY).

It belongs to the major facilitator superfamily. Nitrate/nitrite porter (TC 2.A.1.8) family.

It localises to the cell membrane. Probably required for nitrate uptake under anoxic conditions. Also possibly involved in excretion of nitrite produced by the dissimilatory reduction of nitrate. This Staphylococcus haemolyticus (strain JCSC1435) protein is Probable nitrate transporter NarT (narT).